The following is a 984-amino-acid chain: Putative formate dehydrogenase SAB2186c (984 aa).

Residues 3 to 79 (EHLVVTLDGK…PMTVNTVNND (77 aa)) form the 2Fe-2S ferredoxin-type domain. 4 residues coordinate [2Fe-2S] cluster: cysteine 37, cysteine 48, cysteine 51, and cysteine 63. The 41-residue stretch at 79–119 (DVKDAQKEALDRILEKHMLYCTVCDYNNGDCEIHNTMDAWG) folds into the 4Fe-4S His(Cys)3-ligated-type domain. [4Fe-4S] cluster contacts are provided by histidine 95, cysteine 99, cysteine 102, cysteine 109, cysteine 147, cysteine 150, cysteine 153, cysteine 157, cysteine 190, cysteine 193, cysteine 196, cysteine 200, cysteine 264, cysteine 267, cysteine 271, and cysteine 299. 2 consecutive 4Fe-4S ferredoxin-type domains span residues 138–165 (PFYR…VNET) and 181–211 (NDVP…VNME). Residues 252 to 984 (MRKERIKKTK…YVFPGNQVDK (733 aa)) are formate dehydrogenase. The region spanning 257-313 (IKKTKTVCTYCGVGCSFEVWTKDREILKVQPSHDSPANKIATCVKGKFSWGHINSDQ) is the 4Fe-4S Mo/W bis-MGD-type domain.

This sequence in the C-terminal section; belongs to the prokaryotic molybdopterin-containing oxidoreductase family. Requires [2Fe-2S] cluster as cofactor. [4Fe-4S] cluster is required as a cofactor. The cofactor is Mo-bis(molybdopterin guanine dinucleotide).

It catalyses the reaction formate + NAD(+) = CO2 + NADH. The sequence is that of Putative formate dehydrogenase SAB2186c from Staphylococcus aureus (strain bovine RF122 / ET3-1).